Reading from the N-terminus, the 21-residue chain is Cutinase 2 (21 aa).

This sequence belongs to the cutinase family.

The protein localises to the secreted. It carries out the reaction cutin + H2O = cutin monomers.. With respect to regulation, inhibited by diisopropyl fluorophosphate (DFP). Catalyzes the hydrolysis of complex carboxylic polyesters found in the cell wall of plants. Degrades cutin, a macromolecule that forms the structure of the plant cuticle. Allows pathogenic fungi to penetrate through the cuticular barrier into the host plant during the initial stage of fungal infection. The sequence is that of Cutinase 2 from Colletotrichum gloeosporioides (Anthracnose fungus).